Reading from the N-terminus, the 345-residue chain is N-acetyl-gamma-glutamyl-phosphate reductase (345 aa).

Cys-149 is a catalytic residue.

It belongs to the NAGSA dehydrogenase family. Type 1 subfamily.

The protein resides in the cytoplasm. It carries out the reaction N-acetyl-L-glutamate 5-semialdehyde + phosphate + NADP(+) = N-acetyl-L-glutamyl 5-phosphate + NADPH + H(+). It participates in amino-acid biosynthesis; L-arginine biosynthesis; N(2)-acetyl-L-ornithine from L-glutamate: step 3/4. In terms of biological role, catalyzes the NADPH-dependent reduction of N-acetyl-5-glutamyl phosphate to yield N-acetyl-L-glutamate 5-semialdehyde. This chain is N-acetyl-gamma-glutamyl-phosphate reductase, found in Bacillus subtilis (strain 168).